Reading from the N-terminus, the 303-residue chain is Quinolinate synthase (303 aa).

Iminosuccinate contacts are provided by histidine 23 and serine 40. Residue cysteine 85 participates in [4Fe-4S] cluster binding. Residues 111-113 and serine 128 each bind iminosuccinate; that span reads YVN. [4Fe-4S] cluster is bound at residue cysteine 171. Residues 197-199 and threonine 214 each bind iminosuccinate; that span reads HPE. Cysteine 259 contacts [4Fe-4S] cluster.

This sequence belongs to the quinolinate synthase family. Type 2 subfamily. Requires [4Fe-4S] cluster as cofactor.

The protein localises to the cytoplasm. The catalysed reaction is iminosuccinate + dihydroxyacetone phosphate = quinolinate + phosphate + 2 H2O + H(+). It participates in cofactor biosynthesis; NAD(+) biosynthesis; quinolinate from iminoaspartate: step 1/1. Catalyzes the condensation of iminoaspartate with dihydroxyacetone phosphate to form quinolinate. The polypeptide is Quinolinate synthase (Thermodesulfovibrio yellowstonii (strain ATCC 51303 / DSM 11347 / YP87)).